The sequence spans 188 residues: UPF0301 protein CPn_0139/CP_0633/CPj0139/CpB0140 (188 aa).

The protein belongs to the UPF0301 (AlgH) family.

This is UPF0301 protein CPn_0139/CP_0633/CPj0139/CpB0140 from Chlamydia pneumoniae (Chlamydophila pneumoniae).